Reading from the N-terminus, the 31-residue chain is Cytochrome b6-f complex subunit 6 (31 aa).

The helical transmembrane segment at 4–24 threads the bilayer; the sequence is ITSYFGFLLAALTITSALFIG.

The protein belongs to the PetL family. The 4 large subunits of the cytochrome b6-f complex are cytochrome b6, subunit IV (17 kDa polypeptide, PetD), cytochrome f and the Rieske protein, while the 4 small subunits are PetG, PetL, PetM and PetN. The complex functions as a dimer.

Its subcellular location is the plastid. The protein localises to the chloroplast thylakoid membrane. Functionally, component of the cytochrome b6-f complex, which mediates electron transfer between photosystem II (PSII) and photosystem I (PSI), cyclic electron flow around PSI, and state transitions. PetL is important for photoautotrophic growth as well as for electron transfer efficiency and stability of the cytochrome b6-f complex. The sequence is that of Cytochrome b6-f complex subunit 6 from Gossypium hirsutum (Upland cotton).